The chain runs to 115 residues: ATP-dependent Clp protease adapter protein ClpS (115 aa).

This sequence belongs to the ClpS family. Binds to the N-terminal domain of the chaperone ClpA.

In terms of biological role, involved in the modulation of the specificity of the ClpAP-mediated ATP-dependent protein degradation. In Leptothrix cholodnii (strain ATCC 51168 / LMG 8142 / SP-6) (Leptothrix discophora (strain SP-6)), this protein is ATP-dependent Clp protease adapter protein ClpS.